An 81-amino-acid polypeptide reads, in one-letter code: Photosystem I iron-sulfur center (81 aa).

4Fe-4S ferredoxin-type domains follow at residues 2–31 (SHAVKIYDTCIGCTQCVRACPLDVLEMVPW) and 37–68 (GQIASSPRTEDCVGCKRCETACPTDFLSIRVY). The [4Fe-4S] cluster site is built by Cys-11, Cys-14, Cys-17, Cys-21, Cys-48, Cys-51, Cys-54, and Cys-58.

In terms of assembly, the cyanobacterial PSI reaction center is composed of one copy each of PsaA,B,C,D,E,F,I,J,K,L,M and X, and forms trimeric complexes. It depends on [4Fe-4S] cluster as a cofactor.

The protein localises to the cellular thylakoid membrane. The enzyme catalyses reduced [plastocyanin] + hnu + oxidized [2Fe-2S]-[ferredoxin] = oxidized [plastocyanin] + reduced [2Fe-2S]-[ferredoxin]. Apoprotein for the two 4Fe-4S centers FA and FB of photosystem I (PSI); essential for photochemical activity. FB is the terminal electron acceptor of PSI, donating electrons to ferredoxin. The C-terminus interacts with PsaA/B/D and helps assemble the protein into the PSI complex. Required for binding of PsaD and PsaE to PSI. PSI is a plastocyanin/cytochrome c6-ferredoxin oxidoreductase, converting photonic excitation into a charge separation, which transfers an electron from the donor P700 chlorophyll pair to the spectroscopically characterized acceptors A0, A1, FX, FA and FB in turn. This Synechococcus sp. (strain WH7803) protein is Photosystem I iron-sulfur center.